Consider the following 64-residue polypeptide: Large ribosomal subunit protein bL28 (64 aa).

Belongs to the bacterial ribosomal protein bL28 family.

This chain is Large ribosomal subunit protein bL28, found in Bifidobacterium longum (strain NCC 2705).